A 752-amino-acid chain; its full sequence is Phosphatidylinositol 4-phosphate 5-kinase 1 (752 aa).

7 MORN repeats span residues 81–103 (YIGS…DGCM), 104–126 (YEGD…SGAT), 127–149 (YEGE…DGDT), 150–172 (YRGT…NGDF), 173–195 (YEGT…NGNQ), 196–218 (YTGE…NGNR), and 219–241 (YEGL…DGSS). Residues 349-748 (SKGHKKYDLM…RFRDFISRIF (400 aa)) form the PIPK domain. The interval 708–729 (YDITKKIEHAYKSLQADPASIS) is activation loop.

In terms of processing, phosphorylation inactivates the enzyme. As to expression, expressed in the whole plant, preferentially in roots. Strongly expressed in meristematic tissues, namely procambial cell layers.

It catalyses the reaction a 1,2-diacyl-sn-glycero-3-phospho-(1D-myo-inositol 4-phosphate) + ATP = a 1,2-diacyl-sn-glycero-3-phospho-(1D-myo-inositol-4,5-bisphosphate) + ADP + H(+). Catalyzes the synthesis of phosphatidylinositol 4,5-bisphosphate and phosphatidylinositol 3,4-bisphosphate. In Arabidopsis thaliana (Mouse-ear cress), this protein is Phosphatidylinositol 4-phosphate 5-kinase 1 (PIP5K1).